The chain runs to 475 residues: Glycogen synthase (475 aa).

Lysine 15 contributes to the ADP-alpha-D-glucose binding site.

The protein belongs to the glycosyltransferase 1 family. Bacterial/plant glycogen synthase subfamily.

It carries out the reaction [(1-&gt;4)-alpha-D-glucosyl](n) + ADP-alpha-D-glucose = [(1-&gt;4)-alpha-D-glucosyl](n+1) + ADP + H(+). It participates in glycan biosynthesis; glycogen biosynthesis. Functionally, synthesizes alpha-1,4-glucan chains using ADP-glucose. This chain is Glycogen synthase, found in Anaeromyxobacter sp. (strain K).